Here is a 1039-residue protein sequence, read N- to C-terminus: Probable calcium-transporting ATPase 9, plasma membrane-type (1039 aa).

At 1–175 the chain is on the cytoplasmic side; it reads MEKLDRYLQE…FVWDALQDMT (175 aa). 2 helical membrane passes run 176–196 and 199–219; these read LIIL…TEGW and GMYD…VTAV. The Cytoplasmic portion of the chain corresponds to 220-250; it reads SDYKQSLQFKELDNEKKKIFIHVTRDGRRQK. 2 helical membrane-spanning segments follow: residues 251–271 and 353–373; these read ISIY…DQVP and VATI…LVLL. Residues 374–406 are Cytoplasmic-facing; sequence VRFLIDKGMTVGLLKWYSTDALTIVNYFATAVT. The helical transmembrane segment at 407–427 threads the bilayer; it reads IIVVAVPEGLPLAVTLSLAFA. The active-site 4-aspartylphosphate intermediate is the D456. Positions 758 and 762 each coordinate Mg(2+). A helical transmembrane segment spans residues 825 to 845; sequence IVALVINFVSACIIGSAPLTA. Residues 846–847 are Cytoplasmic-facing; that stretch reads VQ. The next 2 membrane-spanning stretches (helical) occupy residues 848–868 and 892–912; these read LLWV…TEPP and NIMG…FGGE. Over 913–960 the chain is Cytoplasmic; sequence RLLNIKGADSKSIINTLIFNSFVFCQVFNEINSREMQKINVFRGIISN. Helical transmembrane passes span 961-981 and 995-1015; these read WIFI…IEFL and WLLS…LKCI. Residues 1016–1039 lie on the Cytoplasmic side of the membrane; that stretch reads PVGSGETSATPNGYRPLANGPDDI.

The protein belongs to the cation transport ATPase (P-type) (TC 3.A.3) family. Type IIB subfamily.

It is found in the membrane. It catalyses the reaction Ca(2+)(in) + ATP + H2O = Ca(2+)(out) + ADP + phosphate + H(+). Activated by calmodulin. Functionally, this magnesium-dependent enzyme catalyzes the hydrolysis of ATP coupled with the translocation of calcium from the cytosol out of the cell, into the endoplasmic reticulum, or into organelles. The polypeptide is Probable calcium-transporting ATPase 9, plasma membrane-type (Oryza sativa subsp. japonica (Rice)).